Consider the following 515-residue polypeptide: Vesicular acetylcholine transporter (515 aa).

At 1-40 (MGVTMAVGLAKAAMGKISSAIGERSKRISGAMNEPRRKRK) the chain is on the cytoplasmic side. Residues 41–61 (ILLVIVCIAMLLDNMLYMVIV) traverse the membrane as a helical segment. The Lumenal, vesicle segment spans residues 62–112 (PIIPNYLETIRTYKLVYITTPSNGTNGSLLNSTQRAVLERNPNANEDIQIG). 3 N-linked (GlcNAc...) asparagine glycosylation sites follow: Asn84, Asn87, and Asn92. A helical membrane pass occupies residues 113–133 (VLFASKAILQLLSNPFTGTFI). Residues 134–139 (DRVGYD) lie on the Cytoplasmic side of the membrane. A helical transmembrane segment spans residues 140-160 (IPLLIGLTIMFFSTITFAFGE). Residues 161 to 169 (SYAVLFAAR) are Lumenal, vesicle-facing. Residues 170-190 (SLQGLGSAFADTSGIAMIADK) form a helical membrane-spanning segment. The Cytoplasmic segment spans residues 191–201 (YTEESERTQAL). A helical membrane pass occupies residues 202-222 (GIALAFISFGSLVAPPFGGVL). Residues 223 to 229 (YQFAGKW) lie on the Lumenal, vesicle side of the membrane. The helical transmembrane segment at 230 to 250 (VPFLVLSFVCLLDGILLLMVV) threads the bilayer. Topologically, residues 251-271 (TPFASRTRENMLQGTPIYKLM) are cytoplasmic. The helical transmembrane segment at 272–292 (IDPYIAVVAGALTTCNIPLAF) threads the bilayer. Residues 293–310 (LEPTISNWMKKTMNASEW) are Lumenal, vesicle-facing. The N-linked (GlcNAc...) asparagine glycan is linked to Asn306. Residues 311-331 (QMGITWLPAFFPHILGVYITV) form a helical membrane-spanning segment. Over 332–341 (KLAAKYPNYQ) the chain is Cytoplasmic. A helical membrane pass occupies residues 342–362 (WFYGAVGLVIIGASSCTIPAC). The Lumenal, vesicle segment spans residues 363 to 367 (RNFEE). A helical membrane pass occupies residues 368–388 (LIIPLCALCFGIALVDTALLP). Topologically, residues 389-404 (TLAFLVDIRYVSVYGS) are cytoplasmic. A helical transmembrane segment spans residues 405–425 (VYAIADISYSVAYALGPIMAG). Residues 426-432 (QIVHDLG) are Lumenal, vesicle-facing. A helical transmembrane segment spans residues 433-453 (FVQLNLGMGLVNILYAPALLF). At 454 to 515 (LRNVCQMKPS…VLSDQEGYSE (62 aa)) the chain is on the cytoplasmic side. The interval 489 to 515 (AAKEPHGSSSGNHSVHAVLSDQEGYSE) is disordered.

This sequence belongs to the major facilitator superfamily. Vesicular transporter family. Electric lobe.

It localises to the membrane. Its function is as follows. Involved in acetylcholine transport into synaptic vesicles. The protein is Vesicular acetylcholine transporter of Tetronarce californica (Pacific electric ray).